A 261-amino-acid polypeptide reads, in one-letter code: Cytochrome c oxidase subunit 3 (261 aa).

Residues 1 to 15 lie on the Mitochondrial matrix side of the membrane; the sequence is MTHQTHAYHMVNPSP. A helical transmembrane segment spans residues 16-34; that stretch reads WPLTGALSALLMTSGLTMW. The Mitochondrial intermembrane segment spans residues 35 to 40; that stretch reads FHFNSM. Residues 41–66 form a helical membrane-spanning segment; sequence TLLTLGLTTNMLTMYQWWRDIIREST. Over 67 to 72 the chain is Mitochondrial matrix; sequence FQGHHT. The chain crosses the membrane as a helical span at residues 73–105; it reads PNVQKGLRYGMILFIISEVLFFTGFFWAFYHSS. Residues 106–128 lie on the Mitochondrial intermembrane side of the membrane; the sequence is LAPTPELGGCWPPTGIHPLNPLE. A helical membrane pass occupies residues 129–152; the sequence is VPLLNTSVLLASGVSITWAHHSLM. At 153-155 the chain is on the mitochondrial matrix side; the sequence is EGN. The helical transmembrane segment at 156–183 threads the bilayer; sequence RNHMLQALFITISLGVYFTLLQASEYYE. Topologically, residues 184-190 are mitochondrial intermembrane; that stretch reads APFTISD. Residues 191-223 traverse the membrane as a helical segment; the sequence is GVYGSTFFVATGFHGLHVIIGSTFLIVCFFRQL. At 224 to 232 the chain is on the mitochondrial matrix side; the sequence is KFHFTSNHH. A helical transmembrane segment spans residues 233–256; sequence FGFEAAAWYWHFVDVVWLFLYVSI. Topologically, residues 257–261 are mitochondrial intermembrane; sequence YWWGS.

This sequence belongs to the cytochrome c oxidase subunit 3 family. As to quaternary structure, component of the cytochrome c oxidase (complex IV, CIV), a multisubunit enzyme composed of 14 subunits. The complex is composed of a catalytic core of 3 subunits MT-CO1, MT-CO2 and MT-CO3, encoded in the mitochondrial DNA, and 11 supernumerary subunits COX4I, COX5A, COX5B, COX6A, COX6B, COX6C, COX7A, COX7B, COX7C, COX8 and NDUFA4, which are encoded in the nuclear genome. The complex exists as a monomer or a dimer and forms supercomplexes (SCs) in the inner mitochondrial membrane with NADH-ubiquinone oxidoreductase (complex I, CI) and ubiquinol-cytochrome c oxidoreductase (cytochrome b-c1 complex, complex III, CIII), resulting in different assemblies (supercomplex SCI(1)III(2)IV(1) and megacomplex MCI(2)III(2)IV(2)).

It is found in the mitochondrion inner membrane. It catalyses the reaction 4 Fe(II)-[cytochrome c] + O2 + 8 H(+)(in) = 4 Fe(III)-[cytochrome c] + 2 H2O + 4 H(+)(out). Functionally, component of the cytochrome c oxidase, the last enzyme in the mitochondrial electron transport chain which drives oxidative phosphorylation. The respiratory chain contains 3 multisubunit complexes succinate dehydrogenase (complex II, CII), ubiquinol-cytochrome c oxidoreductase (cytochrome b-c1 complex, complex III, CIII) and cytochrome c oxidase (complex IV, CIV), that cooperate to transfer electrons derived from NADH and succinate to molecular oxygen, creating an electrochemical gradient over the inner membrane that drives transmembrane transport and the ATP synthase. Cytochrome c oxidase is the component of the respiratory chain that catalyzes the reduction of oxygen to water. Electrons originating from reduced cytochrome c in the intermembrane space (IMS) are transferred via the dinuclear copper A center (CU(A)) of subunit 2 and heme A of subunit 1 to the active site in subunit 1, a binuclear center (BNC) formed by heme A3 and copper B (CU(B)). The BNC reduces molecular oxygen to 2 water molecules using 4 electrons from cytochrome c in the IMS and 4 protons from the mitochondrial matrix. The polypeptide is Cytochrome c oxidase subunit 3 (MT-CO3) (Antidorcas marsupialis (Springbok)).